The chain runs to 195 residues: MKEIVIASNNQGKINDFKVIFPDYHVIGISELIPDFDVEETGSTFEENAILKSEAAAKALNKTVIADDSGLEVFALNGEPGIYSARYAGENKSDEANIEKLLNKLGNTTDRRAQFVCVISMSGPDMETKVFKGTVSGEIADGKYGENGFGYDPIFYVPKLDKTMAQLSKEQKGQISHRRNAINLLQAFLEGDKNV.

Ser8 to Lys13 is a substrate binding site. Mg(2+) is bound by residues Glu39 and Asp68. The active-site Proton acceptor is the Asp68. Residues Ser69, Phe149–Asp152, Lys172, and His177–Arg178 contribute to the substrate site.

This sequence belongs to the HAM1 NTPase family. As to quaternary structure, homodimer. The cofactor is Mg(2+).

It catalyses the reaction XTP + H2O = XMP + diphosphate + H(+). The catalysed reaction is dITP + H2O = dIMP + diphosphate + H(+). The enzyme catalyses ITP + H2O = IMP + diphosphate + H(+). Functionally, pyrophosphatase that catalyzes the hydrolysis of nucleoside triphosphates to their monophosphate derivatives, with a high preference for the non-canonical purine nucleotides XTP (xanthosine triphosphate), dITP (deoxyinosine triphosphate) and ITP. Seems to function as a house-cleaning enzyme that removes non-canonical purine nucleotides from the nucleotide pool, thus preventing their incorporation into DNA/RNA and avoiding chromosomal lesions. This chain is dITP/XTP pyrophosphatase, found in Staphylococcus aureus (strain COL).